A 250-amino-acid polypeptide reads, in one-letter code: Solute carrier family 66 member 2 (250 aa).

The 67-residue stretch at 14 to 80 (RMLVSWGASC…HHFESPLLWQ (67 aa)) folds into the PQ-loop 1 domain. A run of 6 helical transmembrane segments spans residues 15–35 (MLVS…PYIP), 49–69 (FSIY…LFWF), 72–92 (HFES…LLML), 118–138 (FFWH…FTGV), 151–173 (LFVE…PQLY), and 212–232 (FSIC…QVYL). A PQ-loop 2 domain is found at 149-215 (SPLFVEILGF…NQAPFQFSIC (67 aa)).

The protein resides in the membrane. The polypeptide is Solute carrier family 66 member 2 (slc66a2) (Xenopus laevis (African clawed frog)).